The following is a 458-amino-acid chain: Cysteine--tRNA ligase (458 aa).

Cys29 is a Zn(2+) binding site. Residues 31–41 (MTVYDLCHLGH) carry the 'HIGH' region motif. 3 residues coordinate Zn(2+): Cys213, His238, and Glu242. The 'KMSKS' region signature appears at 270-274 (KMSKS). Lys273 is an ATP binding site.

The protein belongs to the class-I aminoacyl-tRNA synthetase family. Monomer. Zn(2+) is required as a cofactor.

It localises to the cytoplasm. It carries out the reaction tRNA(Cys) + L-cysteine + ATP = L-cysteinyl-tRNA(Cys) + AMP + diphosphate. The chain is Cysteine--tRNA ligase from Acidovorax sp. (strain JS42).